A 335-amino-acid chain; its full sequence is ETS translocation variant 2 (335 aa).

Disordered regions lie at residues 94-138 and 201-220; these read DPWS…SWSH and GHQS…SDRA. Residues 205–220 show a composition bias toward polar residues; the sequence is PAFTTPSKSNKQSDRA. Residues 234-314 constitute a DNA-binding region (ETS); the sequence is IQLWQFLLEL…GGRKYTYRFG (81 aa).

It belongs to the ETS family. As to expression, testis.

It localises to the nucleus. Its function is as follows. Binds to DNA sequences containing the consensus pentanucleotide 5'-CGGA[AT]-3'. In Mus musculus (Mouse), this protein is ETS translocation variant 2 (Etv2).